Here is a 160-residue protein sequence, read N- to C-terminus: Cyclic pyranopterin monophosphate synthase (160 aa).

Residues 75–77 and 113–114 each bind substrate; these read LCH and ME. D128 is an active-site residue.

This sequence belongs to the MoaC family. Homohexamer; trimer of dimers.

The catalysed reaction is (8S)-3',8-cyclo-7,8-dihydroguanosine 5'-triphosphate = cyclic pyranopterin phosphate + diphosphate. It functions in the pathway cofactor biosynthesis; molybdopterin biosynthesis. Its function is as follows. Catalyzes the conversion of (8S)-3',8-cyclo-7,8-dihydroguanosine 5'-triphosphate to cyclic pyranopterin monophosphate (cPMP). This is Cyclic pyranopterin monophosphate synthase from Ruthia magnifica subsp. Calyptogena magnifica.